Here is a 315-residue protein sequence, read N- to C-terminus: Ribosomal RNA small subunit methyltransferase H (315 aa).

S-adenosyl-L-methionine contacts are provided by residues 36–38 (GGH), Asp56, Phe80, Asp102, and Gln109.

The protein belongs to the methyltransferase superfamily. RsmH family.

The protein resides in the cytoplasm. The catalysed reaction is cytidine(1402) in 16S rRNA + S-adenosyl-L-methionine = N(4)-methylcytidine(1402) in 16S rRNA + S-adenosyl-L-homocysteine + H(+). In terms of biological role, specifically methylates the N4 position of cytidine in position 1402 (C1402) of 16S rRNA. The sequence is that of Ribosomal RNA small subunit methyltransferase H from Proteus mirabilis (strain HI4320).